Here is a 292-residue protein sequence, read N- to C-terminus: ATP synthase gamma chain (292 aa).

The protein belongs to the ATPase gamma chain family. As to quaternary structure, F-type ATPases have 2 components, CF(1) - the catalytic core - and CF(0) - the membrane proton channel. CF(1) has five subunits: alpha(3), beta(3), gamma(1), delta(1), epsilon(1). CF(0) has three main subunits: a, b and c.

Its subcellular location is the cell inner membrane. In terms of biological role, produces ATP from ADP in the presence of a proton gradient across the membrane. The gamma chain is believed to be important in regulating ATPase activity and the flow of protons through the CF(0) complex. This chain is ATP synthase gamma chain, found in Chlorobaculum parvum (strain DSM 263 / NCIMB 8327) (Chlorobium vibrioforme subsp. thiosulfatophilum).